The primary structure comprises 210 residues: Small ribosomal subunit protein uS7 (210 aa).

The protein belongs to the universal ribosomal protein uS7 family. As to quaternary structure, component of the small ribosomal subunit. Part of the small subunit (SSU) processome, composed of more than 70 proteins and the RNA chaperone small nucleolar RNA (snoRNA) U3.

The protein resides in the cytoplasm. The protein localises to the nucleus. Its subcellular location is the nucleolus. In terms of biological role, component of the small ribosomal subunit. The ribosome is a large ribonucleoprotein complex responsible for the synthesis of proteins in the cell. Part of the small subunit (SSU) processome, first precursor of the small eukaryotic ribosomal subunit. During the assembly of the SSU processome in the nucleolus, many ribosome biogenesis factors, an RNA chaperone and ribosomal proteins associate with the nascent pre-rRNA and work in concert to generate RNA folding, modifications, rearrangements and cleavage as well as targeted degradation of pre-ribosomal RNA by the RNA exosome. The sequence is that of Small ribosomal subunit protein uS7 (rps-5) from Caenorhabditis elegans.